Here is a 143-residue protein sequence, read N- to C-terminus: Small ribosomal subunit protein uS12 (143 aa).

This sequence belongs to the universal ribosomal protein uS12 family. In terms of assembly, component of the 40S small ribosomal subunit.

The protein resides in the cytoplasm. It localises to the cytosol. Its subcellular location is the rough endoplasmic reticulum. This is Small ribosomal subunit protein uS12 (rps23) from Gillichthys mirabilis (Long-jawed mudsucker).